The chain runs to 390 residues: Digeranylgeranylglycerophospholipid reductase (390 aa).

The FAD site is built by Ala18, Glu37, Cys48, Ala49, Ala51, Arg98, Val122, Asp278, Gly290, and Ile291. An a 2,3-bis-O-(geranylgeranyl)-sn-glycerol 1-phospholipid-binding site is contributed by Val368.

The protein belongs to the geranylgeranyl reductase family. DGGGPL reductase subfamily. FAD serves as cofactor.

The enzyme catalyses a 2,3-bis-O-phytanyl-sn-glycerol 1-phospholipid + 8 A = a 2,3-bis-O-(geranylgeranyl)-sn-glycerol 1-phospholipid + 8 AH2. The catalysed reaction is 2,3-bis-O-(phytanyl)-sn-glycerol 1-phosphate + 8 A = 2,3-bis-O-(geranylgeranyl)-sn-glycerol 1-phosphate + 8 AH2. It carries out the reaction CDP-2,3-bis-O-(geranylgeranyl)-sn-glycerol + 8 AH2 = CDP-2,3-bis-O-(phytanyl)-sn-glycerol + 8 A. It catalyses the reaction archaetidylserine + 8 AH2 = 2,3-bis-O-phytanyl-sn-glycero-3-phospho-L-serine + 8 A. It participates in membrane lipid metabolism; glycerophospholipid metabolism. Is involved in the reduction of 2,3-digeranylgeranylglycerophospholipids (unsaturated archaeols) into 2,3-diphytanylglycerophospholipids (saturated archaeols) in the biosynthesis of archaeal membrane lipids. Catalyzes the formation of archaetidic acid (2,3-di-O-phytanyl-sn-glyceryl phosphate) from 2,3-di-O-geranylgeranylglyceryl phosphate (DGGGP) via the hydrogenation of each double bond of the isoprenoid chains. Is also probably able to reduce double bonds of geranyl groups in CDP-2,3-bis-O-(geranylgeranyl)-sn-glycerol and archaetidylserine, thus acting at various stages in the biosynthesis of archaeal membrane lipids. This chain is Digeranylgeranylglycerophospholipid reductase, found in Methanococcus vannielii (strain ATCC 35089 / DSM 1224 / JCM 13029 / OCM 148 / SB).